A 386-amino-acid polypeptide reads, in one-letter code: NADH kinase pos5, mitochondrial (386 aa).

The transit peptide at 1 to 42 (MIRAANGFRISVRNTAVCLAPNFRQLKGFSIINLGSLQYFRY) directs the protein to the mitochondrion.

The protein belongs to the NAD kinase family.

It is found in the mitochondrion. The enzyme catalyses NADH + ATP = ADP + NADPH + H(+). In terms of biological role, phosphorylates both NADH and NAD(+), with a preference for NADH. Anti-oxidant factor and key source of the cellular reductant NADPH. The sequence is that of NADH kinase pos5, mitochondrial (pos5) from Schizosaccharomyces pombe (strain 972 / ATCC 24843) (Fission yeast).